The chain runs to 31 residues: 23S rRNA methylase leader peptide (31 aa).

Its function is as follows. This peptide is involved in the control mechanism of the synthesis of the erythromycin resistance protein. In Escherichia coli, this protein is 23S rRNA methylase leader peptide (ermC).